A 226-amino-acid chain; its full sequence is E3 ubiquitin-protein ligase RNF186 (226 aa).

The RING-type zinc-finger motif lies at 39 to 85 (CLVCREPYNCARSPKLLSCQHTFCAVCLKLLLYVQEDTWSIPCPLCR). A run of 2 helical transmembrane segments spans residues 157–177 (HLLL…PGVI) and 179–199 (WVLA…CCHP).

In terms of assembly, interacts with BNIP1. In terms of processing, polyubiquitinated. 'Lys-29'-linked autoubiquitination leads to proteasomal degradation.

The protein resides in the endoplasmic reticulum membrane. It catalyses the reaction S-ubiquitinyl-[E2 ubiquitin-conjugating enzyme]-L-cysteine + [acceptor protein]-L-lysine = [E2 ubiquitin-conjugating enzyme]-L-cysteine + N(6)-ubiquitinyl-[acceptor protein]-L-lysine.. It participates in protein modification; protein ubiquitination. Its function is as follows. E3 ubiquitin protein ligase that is part of an apoptotic signaling pathway activated by endoplasmic reticulum stress. Stimulates the expression of proteins specific of the unfolded protein response (UPR), ubiquitinates BNIP1 and regulates its localization to the mitochondrion and induces calcium release from the endoplasmic reticulum that ultimately leads to cell apoptosis. Plays a role in the maintenance of intestinal homeostasis and clearance of enteric pathogens. Upon NOD2 stimulation, ubiquitinates the ER stress sensor activating transcription factor 6/ATF6 and promotes the unfolded protein response UPR. Participates in basal level of autophagy maintenance by regulating the ubiquitination of EPHB2. Upon stimulation by ligand EFNB1, ubiquitinates EPHB2 and further recruits MAP1LC3B for autophagy induction. Controls nutrient sensing by ubiquitinating Sestrin-2/SESN2, which is an intracellular sensor of cytosolic leucine and inhibitor of mTORC1 activity. The polypeptide is E3 ubiquitin-protein ligase RNF186 (Mus musculus (Mouse)).